Consider the following 469-residue polypeptide: Probable Xaa-Pro aminopeptidase PEPP (469 aa).

Mn(2+) contacts are provided by Asp265, Asp276, Glu399, and Glu439.

This sequence belongs to the peptidase M24B family. Mn(2+) serves as cofactor.

The enzyme catalyses Release of any N-terminal amino acid, including proline, that is linked to proline, even from a dipeptide or tripeptide.. Functionally, catalyzes the removal of a penultimate prolyl residue from the N-termini of peptides. The polypeptide is Probable Xaa-Pro aminopeptidase PEPP (PEPP) (Coccidioides posadasii (strain RMSCC 757 / Silveira) (Valley fever fungus)).